A 233-amino-acid chain; its full sequence is Attacin-B (233 aa).

The signal sequence occupies residues 1-17 (MFAKLFLVSVLLVGVNS). A propeptide spanning residues 18–46 (RYVLVEEPGYYDKQYEEQPQQWVNSRVRR) is cleaved from the precursor.

The protein belongs to the attacin/sarcotoxin-2 family.

It localises to the secreted. In terms of biological role, hemolymph antibacterial protein. This Hyalophora cecropia (Cecropia moth) protein is Attacin-B.